We begin with the raw amino-acid sequence, 141 residues long: ATP synthase epsilon chain (141 aa).

This sequence belongs to the ATPase epsilon chain family. In terms of assembly, F-type ATPases have 2 components, CF(1) - the catalytic core - and CF(0) - the membrane proton channel. CF(1) has five subunits: alpha(3), beta(3), gamma(1), delta(1), epsilon(1). CF(0) has three main subunits: a, b and c.

It localises to the cell inner membrane. In terms of biological role, produces ATP from ADP in the presence of a proton gradient across the membrane. In Halorhodospira halophila (strain DSM 244 / SL1) (Ectothiorhodospira halophila (strain DSM 244 / SL1)), this protein is ATP synthase epsilon chain.